The following is a 216-amino-acid chain: Probable transaldolase (216 aa).

Lys83 functions as the Schiff-base intermediate with substrate in the catalytic mechanism.

It belongs to the transaldolase family. Type 3B subfamily.

The protein localises to the cytoplasm. It carries out the reaction D-sedoheptulose 7-phosphate + D-glyceraldehyde 3-phosphate = D-erythrose 4-phosphate + beta-D-fructose 6-phosphate. It functions in the pathway carbohydrate degradation; pentose phosphate pathway; D-glyceraldehyde 3-phosphate and beta-D-fructose 6-phosphate from D-ribose 5-phosphate and D-xylulose 5-phosphate (non-oxidative stage): step 2/3. In terms of biological role, transaldolase is important for the balance of metabolites in the pentose-phosphate pathway. This Sphingopyxis alaskensis (strain DSM 13593 / LMG 18877 / RB2256) (Sphingomonas alaskensis) protein is Probable transaldolase.